The chain runs to 794 residues: DNA ligase (794 aa).

The tract at residues M1–R47 is disordered. Over residues Q13–T22 the composition is skewed to polar residues. Over residues G27–R47 the composition is skewed to basic and acidic residues. NAD(+)-binding positions include D73–D77, S122–I123, and E160. K162 (N6-AMP-lysine intermediate) is an active-site residue. The NAD(+) site is built by R183, E219, K335, and K359. The Zn(2+) site is built by C457, C460, C475, and C480. The BRCT domain occupies I717 to N794.

The protein belongs to the NAD-dependent DNA ligase family. LigA subfamily. The cofactor is Mg(2+). Mn(2+) is required as a cofactor.

It catalyses the reaction NAD(+) + (deoxyribonucleotide)n-3'-hydroxyl + 5'-phospho-(deoxyribonucleotide)m = (deoxyribonucleotide)n+m + AMP + beta-nicotinamide D-nucleotide.. In terms of biological role, DNA ligase that catalyzes the formation of phosphodiester linkages between 5'-phosphoryl and 3'-hydroxyl groups in double-stranded DNA using NAD as a coenzyme and as the energy source for the reaction. It is essential for DNA replication and repair of damaged DNA. This chain is DNA ligase, found in Akkermansia muciniphila (strain ATCC BAA-835 / DSM 22959 / JCM 33894 / BCRC 81048 / CCUG 64013 / CIP 107961 / Muc).